A 367-amino-acid polypeptide reads, in one-letter code: Glutamate 5-kinase (367 aa).

Lysine 10 is a binding site for ATP. Substrate-binding residues include serine 50, aspartate 137, and asparagine 149. ATP is bound by residues 169 to 170 (TD) and 211 to 217 (TGGMGTK). The PUA domain occupies 275 to 353 (AGEITVDEGA…QQIDAILGYE (79 aa)).

This sequence belongs to the glutamate 5-kinase family.

Its subcellular location is the cytoplasm. It catalyses the reaction L-glutamate + ATP = L-glutamyl 5-phosphate + ADP. The protein operates within amino-acid biosynthesis; L-proline biosynthesis; L-glutamate 5-semialdehyde from L-glutamate: step 1/2. Its function is as follows. Catalyzes the transfer of a phosphate group to glutamate to form L-glutamate 5-phosphate. The sequence is that of Glutamate 5-kinase from Citrobacter koseri (strain ATCC BAA-895 / CDC 4225-83 / SGSC4696).